The following is a 173-amino-acid chain: Co-chaperone protein HscB (173 aa).

Residues 2–74 (DYFTLFGLPV…LKRAEYMLSL (73 aa)) form the J domain.

It belongs to the HscB family. In terms of assembly, interacts with HscA and stimulates its ATPase activity. Interacts with IscU.

Its function is as follows. Co-chaperone involved in the maturation of iron-sulfur cluster-containing proteins. Seems to help targeting proteins to be folded toward HscA. This Serratia proteamaculans (strain 568) protein is Co-chaperone protein HscB.